The following is an 884-amino-acid chain: Coatomer subunit gamma-1 (884 aa).

HEAT repeat units follow at residues 65 to 100, 101 to 138, 286 to 323, 325 to 357, and 358 to 395; these read VEATEVFFAVTKLFQSKDAGLRRLVYLMIKELSPSS, DEVIIVTSSLMKDMNSKTDMYRANAIRVLCRIIDGTLL, RELAPAITVLQLFLSSSKPVLRFAAVRTLNKVAMTRPL, VTNCNVDLESLMSDQNRSIATLAITTLLKTGNE, and SSVDRLMKQITNFMSDIADEFKIVVVEAIRSLCLKFPL. A disordered region spans residues 592–612; sequence QPLQEKKAPGKKPPAGAPAPA. Positions 602–612 are enriched in pro residues; sequence KKPPAGAPAPA.

The protein belongs to the COPG family. As to quaternary structure, oligomeric complex that consists of at least the alpha, beta, beta', gamma, delta, epsilon and zeta subunits.

It is found in the cytoplasm. The protein localises to the golgi apparatus membrane. Its subcellular location is the cytoplasmic vesicle. It localises to the COPI-coated vesicle membrane. Functionally, the coatomer is a cytosolic protein complex that binds to dilysine motifs and reversibly associates with Golgi non-clathrin-coated vesicles, which further mediate biosynthetic protein transport from the ER, via the Golgi up to the trans Golgi network. Coatomer complex is required for budding from Golgi membranes, and is essential for the retrograde Golgi-to-ER transport of dilysine-tagged proteins. This is Coatomer subunit gamma-1 from Oryza sativa subsp. japonica (Rice).